The sequence spans 291 residues: Orotidine 5'-phosphate decarboxylase (291 aa).

The active-site Proton donor is lysine 97.

The protein belongs to the OMP decarboxylase family. Type 2 subfamily.

The catalysed reaction is orotidine 5'-phosphate + H(+) = UMP + CO2. It functions in the pathway pyrimidine metabolism; UMP biosynthesis via de novo pathway; UMP from orotate: step 2/2. In Clostridium kluyveri (strain ATCC 8527 / DSM 555 / NBRC 12016 / NCIMB 10680 / K1), this protein is Orotidine 5'-phosphate decarboxylase.